Consider the following 318-residue polypeptide: uncharacterized protein (318 aa).

The protein to A.aeolicus AA07 and AA11.

This is an uncharacterized protein from Aquifex aeolicus (strain VF5).